The chain runs to 249 residues: ATP synthase subunit a (249 aa).

Transmembrane regions (helical) follow at residues phenylalanine 26 to leucine 46, phenylalanine 84 to phenylalanine 104, isoleucine 114 to phenylalanine 134, leucine 143 to isoleucine 163, isoleucine 185 to isoleucine 205, and alanine 208 to leucine 228.

This sequence belongs to the ATPase A chain family. In terms of assembly, F-type ATPases have 2 components, CF(1) - the catalytic core - and CF(0) - the membrane proton channel. CF(1) has five subunits: alpha(3), beta(3), gamma(1), delta(1), epsilon(1). CF(0) has three main subunits: a(1), b(2) and c(9-12). The alpha and beta chains form an alternating ring which encloses part of the gamma chain. CF(1) is attached to CF(0) by a central stalk formed by the gamma and epsilon chains, while a peripheral stalk is formed by the delta and b chains.

The protein localises to the cell inner membrane. Functionally, key component of the proton channel; it plays a direct role in the translocation of protons across the membrane. The protein is ATP synthase subunit a of Brucella canis (strain ATCC 23365 / NCTC 10854 / RM-666).